A 405-amino-acid polypeptide reads, in one-letter code: DNA primase DnaG (405 aa).

One can recognise a Toprim domain in the interval 172–248; sequence DAIIIVEGRA…HVDYIARAPP (77 aa). Residues Glu-178, Asp-222, and Asp-224 each coordinate Mg(2+). The tract at residues 279–303 is disordered; the sequence is ASGERAEAPPQPAQQPQQEQPAPQR. A compositionally biased stretch (low complexity) spans 292–303; it reads QQPQQEQPAPQR.

The protein belongs to the archaeal DnaG primase family. Forms a ternary complex with MCM helicase and DNA. Component of the archaeal exosome complex. Requires Mg(2+) as cofactor.

It catalyses the reaction ssDNA + n NTP = ssDNA/pppN(pN)n-1 hybrid + (n-1) diphosphate.. In terms of biological role, RNA polymerase that catalyzes the synthesis of short RNA molecules used as primers for DNA polymerase during DNA replication. Also part of the exosome, which is a complex involved in RNA degradation. Acts as a poly(A)-binding protein that enhances the interaction between heteromeric, adenine-rich transcripts and the exosome. This Pyrobaculum arsenaticum (strain DSM 13514 / JCM 11321 / PZ6) protein is DNA primase DnaG.